Reading from the N-terminus, the 119-residue chain is Large ribosomal subunit protein bL17 (119 aa).

This sequence belongs to the bacterial ribosomal protein bL17 family. Part of the 50S ribosomal subunit. Contacts protein L32.

The chain is Large ribosomal subunit protein bL17 from Ureaplasma parvum serovar 3 (strain ATCC 27815 / 27 / NCTC 11736).